A 351-amino-acid polypeptide reads, in one-letter code: Anthranilate phosphoribosyltransferase (351 aa).

5-phospho-alpha-D-ribose 1-diphosphate-binding positions include glycine 89, 92–93, threonine 97, 99–102, 117–125, and serine 129; these read GD, NIST, and KHGNRSASG. Glycine 89 serves as a coordination point for anthranilate. A Mg(2+)-binding site is contributed by serine 101. Asparagine 120 is a binding site for anthranilate. Arginine 175 lines the anthranilate pocket. Mg(2+) contacts are provided by aspartate 234 and glutamate 235.

The protein belongs to the anthranilate phosphoribosyltransferase family. As to quaternary structure, homodimer. Mg(2+) serves as cofactor.

The enzyme catalyses N-(5-phospho-beta-D-ribosyl)anthranilate + diphosphate = 5-phospho-alpha-D-ribose 1-diphosphate + anthranilate. Its pathway is amino-acid biosynthesis; L-tryptophan biosynthesis; L-tryptophan from chorismate: step 2/5. Catalyzes the transfer of the phosphoribosyl group of 5-phosphorylribose-1-pyrophosphate (PRPP) to anthranilate to yield N-(5'-phosphoribosyl)-anthranilate (PRA). The sequence is that of Anthranilate phosphoribosyltransferase from Synechococcus sp. (strain CC9902).